The following is a 253-amino-acid chain: L-cysteine S-thiosulfotransferase subunit SoxA (253 aa).

Residues 1–17 (MGKWVTIIFVLFLYAIA) form the signal peptide. The Cytochrome c domain maps to 44-129 (VYAEQGRDMF…SIATYVATLS (86 aa)). Heme c contacts are provided by C64, C67, H68, C102, C165, C168, and H169. Substrate is bound at residue R210. C214 contacts heme c. The active-site Cysteine persulfide intermediate is the C214.

The protein belongs to the SoxA family. As to quaternary structure, heterodimer of SoxA and SoxX. Heme c is required as a cofactor. Cysteine persulfide at Cys-214.

It is found in the periplasm. It catalyses the reaction L-cysteinyl-[SoxY protein] + thiosulfate + 2 Fe(III)-[cytochrome c] = S-sulfosulfanyl-L-cysteinyl-[SoxY protein] + 2 Fe(II)-[cytochrome c] + 2 H(+). It carries out the reaction S-sulfanyl-L-cysteinyl-[SoxY protein] + thiosulfate + 2 Fe(III)-[cytochrome c] = S-(2-sulfodisulfanyl)-L-cysteinyl-[SoxY protein] + 2 Fe(II)-[cytochrome c] + 2 H(+). Functionally, C-type diheme cytochrome, which is part of the SoxAX cytochrome complex involved in sulfur oxidation. The SoxAX complex catalyzes the formation of a heterodisulfide bond between the conserved cysteine residue on a sulfur carrier SoxYZ complex subunit SoxY and thiosulfate or other inorganic sulfur substrates. This leads to the liberation of two electrons, which may be transferred from the SoxAX complex to another cytochrome c that then channels them into the respiratory electron transport chain. Some electrons may be used for reductive CO(2) fixation. The protein is L-cysteine S-thiosulfotransferase subunit SoxA of Hydrogenobacter thermophilus (strain DSM 6534 / IAM 12695 / TK-6).